Reading from the N-terminus, the 878-residue chain is Alanine--tRNA ligase (878 aa).

His-567, His-571, Cys-669, and His-673 together coordinate Zn(2+).

It belongs to the class-II aminoacyl-tRNA synthetase family. Zn(2+) serves as cofactor.

It localises to the cytoplasm. It carries out the reaction tRNA(Ala) + L-alanine + ATP = L-alanyl-tRNA(Ala) + AMP + diphosphate. Its function is as follows. Catalyzes the attachment of alanine to tRNA(Ala) in a two-step reaction: alanine is first activated by ATP to form Ala-AMP and then transferred to the acceptor end of tRNA(Ala). Also edits incorrectly charged Ser-tRNA(Ala) and Gly-tRNA(Ala) via its editing domain. The polypeptide is Alanine--tRNA ligase (Rickettsia massiliae (strain Mtu5)).